A 273-amino-acid polypeptide reads, in one-letter code: Large ribosomal subunit protein uL29m (273 aa).

The segment covering 247–258 has biased composition (basic and acidic residues); that stretch reads PLRHDRWEKGQE. Residues 247–273 are disordered; the sequence is PLRHDRWEKGQEENSGGETEDGNAPSN.

The protein belongs to the universal ribosomal protein uL29 family. In terms of assembly, component of the mitochondrial large ribosomal subunit. Mature mitochondrial ribosomes consist of a small (37S) and a large (54S) subunit. The 37S subunit contains at least 33 different proteins and 1 molecule of RNA (15S). The 54S subunit contains at least 45 different proteins and 1 molecule of RNA (21S).

The protein resides in the mitochondrion. This chain is Large ribosomal subunit protein uL29m (mrpl4), found in Aspergillus niger (strain ATCC MYA-4892 / CBS 513.88 / FGSC A1513).